Consider the following 167-residue polypeptide: NAD(P)H-quinone oxidoreductase subunit I, chloroplastic (167 aa).

4Fe-4S ferredoxin-type domains lie at Gly55 to Lys84 and Leu95 to Glu124. Cys64, Cys67, Cys70, Cys74, Cys104, Cys107, Cys110, and Cys114 together coordinate [4Fe-4S] cluster.

This sequence belongs to the complex I 23 kDa subunit family. As to quaternary structure, NDH is composed of at least 16 different subunits, 5 of which are encoded in the nucleus. Requires [4Fe-4S] cluster as cofactor.

Its subcellular location is the plastid. The protein resides in the chloroplast thylakoid membrane. It catalyses the reaction a plastoquinone + NADH + (n+1) H(+)(in) = a plastoquinol + NAD(+) + n H(+)(out). It carries out the reaction a plastoquinone + NADPH + (n+1) H(+)(in) = a plastoquinol + NADP(+) + n H(+)(out). NDH shuttles electrons from NAD(P)H:plastoquinone, via FMN and iron-sulfur (Fe-S) centers, to quinones in the photosynthetic chain and possibly in a chloroplast respiratory chain. The immediate electron acceptor for the enzyme in this species is believed to be plastoquinone. Couples the redox reaction to proton translocation, and thus conserves the redox energy in a proton gradient. The chain is NAD(P)H-quinone oxidoreductase subunit I, chloroplastic from Pelargonium hortorum (Common geranium).